Here is a 139-residue protein sequence, read N- to C-terminus: MTRDQVAEELPNLAESKLTALVVDDSFVNQTIHQKLLNRLGIKNDVVTNGKEAVDVYCSGGNYDLILMDMDMPIMNGIQATKRLREMGIESKIAGVTTRANEGEKKEFMEAGLNDFQEKPLTISKLLSILHKLNFYVQT.

The 116-residue stretch at 19–134 folds into the Response regulatory domain; sequence TALVVDDSFV…KLLSILHKLN (116 aa). At Asp69 the chain carries 4-aspartylphosphate.

Belongs to the ARR family. Type-A subfamily. Two-component system major event consists of a His-to-Asp phosphorelay between a sensor histidine kinase (HK) and a response regulator (RR). In plants, the His-to-Asp phosphorelay involves an additional intermediate named Histidine-containing phosphotransfer protein (HPt). This multistep phosphorelay consists of a His-Asp-His-Asp sequential transfer of a phosphate group between first a His and an Asp of the HK protein, followed by the transfer to a conserved His of the HPt protein and finally the transfer to an Asp in the receiver domain of the RR protein. In terms of tissue distribution, mostly expressed in flowers and siliques, primarily restricted to pollen grains.

It is found in the nucleus. Its function is as follows. Functions as a response regulator involved in His-to-Asp phosphorelay signal transduction system. Phosphorylation of the Asp residue in the receiver domain activates the ability of the protein to promote the transcription of target genes. Type-A response regulators seem to act as negative regulators of the cytokinin signaling. This is Two-component response regulator 24 from Arabidopsis thaliana (Mouse-ear cress).